A 1388-amino-acid chain; its full sequence is MKDLMTSYSFTEKKRIRKDFGKHRSILKVPFLLAIQVDSYRAFLQGDVESSQRKDIGLHAALKSVFPIVSYSGNAALEYVGYKLGEPMFDERECRQRGMSYGAPLRVTVRLVIYDRESSTKAVKYIKEQEVYLGEIPLMTENGTFIVNGTERVIVSQLHRSPGVFFDHDRGKTHSSGKLLYSARIIPCRGSWLDFEFDPKDALFTRIDRRRKLPVSILLRALGYSNEEILGEFFEINTFHINPDKGVQLELVPERLRGEILSFNLTDGGGVIVEAGKRITARHVKQLEASGISALAVPDEYLIGRILSHDVIDATTGELLASANSEVNEDRIVAFRKAGIDSVGTLWVNDLDRGAYLSNTLRIDPTRTQLEAQVEIYRMMRPGEPPTKEAAQNLFHNLFFTFDRYDLSMVGRMKFNRRVGRKEVAGEPVLYDKKYFSDRNDEESRRLVSKLGETSDILDVIKGLCEIRNGRGVVDDIDHLGNRRVRSVGEMAENVFRVGLVRVERAVKERLSMAESEGLTPQELINAKPVAAAIKEFFGSSQLSQFMDQNNPLSEVTHKRRLSALGPGGLTRERAGFEVRDVHLSHYGCLCTIETPEGPNIGLINSLAVFARTNQYGFLETPYRKVVEGRVTDEVEYLSAIEENQYVIAQANTLTDDNGQLTESFVPCRFQGESLLKPPSYVHYMDVSPMQTVSVAAALVPFLEHDDANRALMGANMQRQAVPTLRAQKPLVGTGIERTVARDSGVTVNARRGGVIDQVDAGRIVVKVNESEIIGATDAGVDIYGLIKYTRSNQNTCINQRPLVNVGDIVTSGDVLADGPSTDIGELALGQNMLIAFMPWNGYNFEDSILLSERVVEEDRYTTIHIEELTCIARDTKLGSEEISADIPNVSEQALNRLDESGVVYIGAEVRAGDILVGKVTPKGESQLTPEEKLLRAIFGEKASDVKDSSLRVPPGMDGTVIDVQVFTRDGIEKDKRAHQIEEYEIKRVKKDFDDQFRILEGAIYARLRSQIVGKVVNSGVDIKKGEVITGAYLDGLKKSDWFALRMKDEVAVEAIDRAQKQIQAYQKEFDQRFSDKRSKITQGDDLAPGVLKMVKVFLAVKRCIQPGDKMAGRHGNKGVVSNVVPVEDMPFMEDGTPVDIVLNPLGVPSRMNIGQILEVHLGWAAKGLGHRIQRMLEANAAIADLRKFLNEIYNHDKSVVGERVDLSQFSDDELLNMAKNLTDGVPMASPVFDGASEQEIKRMLDLAELPTGGQTQLYDGHTGEPFDRKTTVGYMHYLKLNHLVDDKMHARSTGPYSLVTQQPLGGKAQFGGQRFGEMEVWALEAYGAAYTLQEMLTVKSDDVQGRNQMYKNIVDGDHQMVAGMPESFNVLVKEIRSLAINIELEDN.

It belongs to the RNA polymerase beta chain family. In terms of assembly, the RNAP catalytic core consists of 2 alpha, 1 beta, 1 beta' and 1 omega subunit. When a sigma factor is associated with the core the holoenzyme is formed, which can initiate transcription.

The enzyme catalyses RNA(n) + a ribonucleoside 5'-triphosphate = RNA(n+1) + diphosphate. Its function is as follows. DNA-dependent RNA polymerase catalyzes the transcription of DNA into RNA using the four ribonucleoside triphosphates as substrates. This chain is DNA-directed RNA polymerase subunit beta, found in Xylella fastidiosa (strain 9a5c).